The chain runs to 394 residues: Queuine tRNA-ribosyltransferase (394 aa).

Catalysis depends on aspartate 99, which acts as the Proton acceptor. Substrate contacts are provided by residues 99–103 (DSGGF), aspartate 153, glutamine 195, and glycine 222. An RNA binding region spans residues 253-259 (GVGHPED). Aspartate 272 functions as the Nucleophile in the catalytic mechanism. An RNA binding; important for wobble base 34 recognition region spans residues 277–281 (TRTGR). Residues cysteine 310, cysteine 312, cysteine 315, and histidine 341 each contribute to the Zn(2+) site.

This sequence belongs to the queuine tRNA-ribosyltransferase family. In terms of assembly, homodimer. Within each dimer, one monomer is responsible for RNA recognition and catalysis, while the other monomer binds to the replacement base PreQ1. Zn(2+) is required as a cofactor.

The enzyme catalyses 7-aminomethyl-7-carbaguanine + guanosine(34) in tRNA = 7-aminomethyl-7-carbaguanosine(34) in tRNA + guanine. It functions in the pathway tRNA modification; tRNA-queuosine biosynthesis. Catalyzes the base-exchange of a guanine (G) residue with the queuine precursor 7-aminomethyl-7-deazaguanine (PreQ1) at position 34 (anticodon wobble position) in tRNAs with GU(N) anticodons (tRNA-Asp, -Asn, -His and -Tyr). Catalysis occurs through a double-displacement mechanism. The nucleophile active site attacks the C1' of nucleotide 34 to detach the guanine base from the RNA, forming a covalent enzyme-RNA intermediate. The proton acceptor active site deprotonates the incoming PreQ1, allowing a nucleophilic attack on the C1' of the ribose to form the product. After dissociation, two additional enzymatic reactions on the tRNA convert PreQ1 to queuine (Q), resulting in the hypermodified nucleoside queuosine (7-(((4,5-cis-dihydroxy-2-cyclopenten-1-yl)amino)methyl)-7-deazaguanosine). This Deinococcus radiodurans (strain ATCC 13939 / DSM 20539 / JCM 16871 / CCUG 27074 / LMG 4051 / NBRC 15346 / NCIMB 9279 / VKM B-1422 / R1) protein is Queuine tRNA-ribosyltransferase.